A 164-amino-acid polypeptide reads, in one-letter code: Interferon gamma (164 aa).

Residues 1–19 form the signal peptide; that stretch reads MTCQTYCLFVLSVIMIYFG. Asparagine 42, asparagine 61, and asparagine 95 each carry an N-linked (GlcNAc...) asparagine glycan.

Belongs to the type II (or gamma) interferon family. Homodimer.

Its subcellular location is the secreted. Produced by lymphocytes activated by specific antigens or mitogens. IFN-gamma, in addition to having antiviral activity, has important immunoregulatory functions. It is a potent activator of macrophages, it has antiproliferative effects on transformed cells and it can potentiate the antiviral and antitumor effects of the type I interferons. The protein is Interferon gamma (IFNG) of Anas platyrhynchos (Mallard).